Reading from the N-terminus, the 470-residue chain is Poly(A) polymerase catalytic subunit (470 aa).

Residues Asp-192 and Asp-194 contribute to the active site.

The protein belongs to the poxviridae poly(A) polymerase catalytic subunit family. In terms of assembly, heterodimer of a large (catalytic) subunit and a small (regulatory) subunit.

The enzyme catalyses RNA(n) + ATP = RNA(n)-3'-adenine ribonucleotide + diphosphate. Functionally, polymerase that creates the 3'-poly(A) tail of mRNA's. This chain is Poly(A) polymerase catalytic subunit (PAPL), found in Odocoileus hemionus (Mule deer).